A 330-amino-acid polypeptide reads, in one-letter code: AH receptor-interacting protein (330 aa).

Residue Ser43 is modified to Phosphoserine. A PPIase FKBP-type domain is found at 54 to 146 (RVRGKPMELI…DLDALQQNPQ (93 aa)). TPR repeat units follow at residues 179-212 (VPVI…LKNL), 231-264 (TPLL…YDDN), and 265-298 (VKAY…DPAM).

In terms of assembly, interacts with RET in the pituitary gland; this interaction prevents the formation of the AIP-survivin complex.

The protein resides in the cytoplasm. Its function is as follows. May play a positive role in AHR-mediated (aromatic hydrocarbon receptor) signaling, possibly by influencing its receptivity for ligand and/or its nuclear targeting. This is AH receptor-interacting protein (AIP) from Bos taurus (Bovine).